A 148-amino-acid chain; its full sequence is Aspartate carbamoyltransferase regulatory chain (148 aa).

Zn(2+) is bound by residues Cys106, Cys111, Cys134, and Cys137.

Belongs to the PyrI family. Contains catalytic and regulatory chains. The cofactor is Zn(2+).

Involved in allosteric regulation of aspartate carbamoyltransferase. This is Aspartate carbamoyltransferase regulatory chain from Methanococcus maripaludis (strain C5 / ATCC BAA-1333).